The primary structure comprises 660 residues: Alpha-1,2-mannosyltransferase MNN21 (660 aa).

Residues 1–17 are Cytoplasmic-facing; it reads MFQQLTYRLRLFRRRHK. The chain crosses the membrane as a helical span at residues 18–38; that stretch reads YIFINSIFLSVIIIFLIYSYW. The Extracellular portion of the chain corresponds to 39-660; it reads SNLPAEDNSA…FLESTQNITD (622 aa). The interval 75 to 125 is disordered; that stretch reads PFEEKKPQVNPNNNQEVGVESGASEISQHKQQQQQQQHAKEPTTKTSSKSL. N-linked (GlcNAc...) asparagine glycosylation is present at asparagine 657.

It belongs to the MNN1/MNT family.

The protein localises to the golgi apparatus membrane. Its pathway is protein modification; protein glycosylation. Its function is as follows. Alpha-1,2-mannosyltransferase required for cell wall integrity. Responsible for addition of the first alpha-1,2-linked mannose to form the branches on the mannan backbone of oligosaccharides. Addition of alpha-1,2-mannose is required for stabilization of the alpha-1,6-mannose backbone and hence regulates mannan fibril length; and is important for both immune recognition and virulence. This Candida albicans (strain SC5314 / ATCC MYA-2876) (Yeast) protein is Alpha-1,2-mannosyltransferase MNN21 (MNN21).